Here is a 116-residue protein sequence, read N- to C-terminus: uncharacterized protein (116 aa).

This is an uncharacterized protein from Methanocaldococcus jannaschii (strain ATCC 43067 / DSM 2661 / JAL-1 / JCM 10045 / NBRC 100440) (Methanococcus jannaschii).